Reading from the N-terminus, the 566-residue chain is Putative ABC transporter ATP-binding protein BT9727_2424 (566 aa).

2 ABC transporter domains span residues 5–246 (ISFE…GLRE) and 300–533 (LKVE…ANLK). Residues 39-46 (GRSGSGKS) and 333-340 (GHNGAGKS) each bind ATP.

It belongs to the ABC transporter superfamily.

The protein localises to the cell membrane. Probably part of an ABC transporter complex. Responsible for energy coupling to the transport system. The polypeptide is Putative ABC transporter ATP-binding protein BT9727_2424 (Bacillus thuringiensis subsp. konkukian (strain 97-27)).